Consider the following 213-residue polypeptide: Ras-related protein Rab-4A (213 aa).

Positions 18, 19, 20, 21, 22, 23, 37, 39, and 40 each coordinate GTP. Ser-22 provides a ligand contact to Mg(2+). The short motif at His-39–Glu-44 is the Switch 1 element. Thr-40 and Asp-63 together coordinate Mg(2+). A Switch 2 motif is present at residues Ala-65–Thr-74. The GTP site is built by Gly-66, Asn-121, Lys-122, Asp-124, Ala-152, and Leu-153. S-geranylgeranyl cysteine attachment occurs at residues Cys-211 and Cys-213. Cys-213 carries the cysteine methyl ester modification.

It belongs to the small GTPase superfamily. Rab family. The cofactor is Mg(2+).

It localises to the membrane. It is found in the cytoplasm. The protein localises to the early endosome membrane. The protein resides in the recycling endosome membrane. The enzyme catalyses GTP + H2O = GDP + phosphate + H(+). Its activity is regulated as follows. Regulated by guanine nucleotide exchange factors (GEFs) which promote the exchange of bound GDP for free GTP. Regulated by GTPase activating proteins (GAPs) which increase the GTP hydrolysis activity. Inhibited by GDP dissociation inhibitors (GDIs). Functionally, the small GTPases Rab are key regulators of intracellular membrane trafficking, from the formation of transport vesicles to their fusion with membranes. Rabs cycle between an inactive GDP-bound form and an active GTP-bound form that is able to recruit to membranes different sets of downstream effectors directly responsible for vesicle formation, movement, tethering and fusion. RAB4A is involved in protein transport. Also plays a role in vesicular traffic. Mediates VEGFR2 endosomal trafficking to enhance VEGFR2 signaling. Acts as a regulator of platelet alpha-granule release during activation and aggregation of platelets. This Danio rerio (Zebrafish) protein is Ras-related protein Rab-4A (rab4a).